A 565-amino-acid polypeptide reads, in one-letter code: Phosphatidylinositol 4-kinase gamma 4 (565 aa).

Ubiquitin-like domains are found at residues 32-104 (IVIF…LVVR) and 109-187 (RAIS…RPAK). Positions 257–542 (GYLPVMSTEG…AILPGTSEET (286 aa)) constitute a PI3K/PI4K catalytic domain. Residues 263–269 (STEGSGG) form a G-loop region. ATP is bound by residues 264-270 (TEGSGGV) and Lys286. A disordered region spans residues 291–311 (EPMAKNNPRGLPLSTDGEGLK). 369–372 (QLFV) serves as a coordination point for ATP. The tract at residues 402–410 (ANADRHAGN) is catalytic loop. The segment at 425–451 (PIDHGYCLPEKFEDCTFEWLYWPQARE) is activation loop. Asp427 contributes to the ATP binding site.

This sequence belongs to the PI3/PI4-kinase family. Type II PI4K subfamily. Interacts with FTIP1 and RPN10. Specifically expressed in the phloem including companion cells.

Its subcellular location is the nucleus. It localises to the endoplasmic reticulum. The enzyme catalyses a 1,2-diacyl-sn-glycero-3-phospho-(1D-myo-inositol) + ATP = a 1,2-diacyl-sn-glycero-3-phospho-(1D-myo-inositol 4-phosphate) + ADP + H(+). Its function is as follows. The phosphorylation of phosphatidylinositol (PI) to PI4P is the first committed step in the generation of phosphatidylinositol 4,5-bisphosphate (PIP2), a precursor of the second messenger inositol 1,4,5-trisphosphate (InsP3). Involved in the control of flowering under long day conditions by promoting degradation of FTIP1. Recruits FTIP1 for degradation by the 26S proteasome in leaves, which affects RFT1 transport to the shoot apical meristem (SAM). The polypeptide is Phosphatidylinositol 4-kinase gamma 4 (Oryza sativa subsp. japonica (Rice)).